Here is a 105-residue protein sequence, read N- to C-terminus: UPF0145 protein jk0060 (105 aa).

Belongs to the UPF0145 family.

In Corynebacterium jeikeium (strain K411), this protein is UPF0145 protein jk0060.